A 269-amino-acid polypeptide reads, in one-letter code: Tryptophan synthase alpha chain (269 aa).

Residues Glu-49 and Asp-60 each act as proton acceptor in the active site.

This sequence belongs to the TrpA family. In terms of assembly, tetramer of two alpha and two beta chains.

The enzyme catalyses (1S,2R)-1-C-(indol-3-yl)glycerol 3-phosphate + L-serine = D-glyceraldehyde 3-phosphate + L-tryptophan + H2O. Its pathway is amino-acid biosynthesis; L-tryptophan biosynthesis; L-tryptophan from chorismate: step 5/5. Its function is as follows. The alpha subunit is responsible for the aldol cleavage of indoleglycerol phosphate to indole and glyceraldehyde 3-phosphate. This Actinobacillus succinogenes (strain ATCC 55618 / DSM 22257 / CCUG 43843 / 130Z) protein is Tryptophan synthase alpha chain.